The following is a 360-amino-acid chain: MLVWLAEYLVQYNTAFNVVSYITFRAIMALLTAMGIGLWIGPEVIRRLQLLKFGQEVRNDGPESHFKKRGTPTMGGIMILIAIGVSTLLWADLRNSYIWFVLFVLFGYGAVGFVDDYWKIKRKNTDGLIARWKYFWLSVIALIAVFGIYAVGKDTAATQLVVPFFKDVMPQLGIFFIILSYFVIVGTSNAVNLTDGLDGLAIVPTIMVASAFALIAWATGNFNFAQYLHIPFVPNAGELVILCTAIVGAGLGFLWYNTYPAQVFMGDVGSLSLGGALGTIAVLVRQELLLVIMGGVFVVEALSVILQVGSYKLRQKRIFRMAPIHHHFELKGWPEPRVIVRFWIITLMLVLIGLVTLKLR.

Helical transmembrane passes span 21-41 (YITF…LWIG), 73-93 (TMGG…WADL), 98-118 (IWFV…DDYW), 132-152 (WKYF…YAVG), 168-188 (VMPQ…VGTS), 199-219 (GLAI…AWAT), 236-256 (AGEL…FLWY), 263-283 (VFMG…IAVL), 288-308 (LLLV…ILQV), and 338-358 (VIVR…VTLK).

This sequence belongs to the glycosyltransferase 4 family. MraY subfamily. The cofactor is Mg(2+).

It is found in the cell inner membrane. It carries out the reaction UDP-N-acetyl-alpha-D-muramoyl-L-alanyl-gamma-D-glutamyl-meso-2,6-diaminopimeloyl-D-alanyl-D-alanine + di-trans,octa-cis-undecaprenyl phosphate = di-trans,octa-cis-undecaprenyl diphospho-N-acetyl-alpha-D-muramoyl-L-alanyl-D-glutamyl-meso-2,6-diaminopimeloyl-D-alanyl-D-alanine + UMP. The protein operates within cell wall biogenesis; peptidoglycan biosynthesis. Catalyzes the initial step of the lipid cycle reactions in the biosynthesis of the cell wall peptidoglycan: transfers peptidoglycan precursor phospho-MurNAc-pentapeptide from UDP-MurNAc-pentapeptide onto the lipid carrier undecaprenyl phosphate, yielding undecaprenyl-pyrophosphoryl-MurNAc-pentapeptide, known as lipid I. The polypeptide is Phospho-N-acetylmuramoyl-pentapeptide-transferase (Actinobacillus pleuropneumoniae serotype 5b (strain L20)).